The following is a 73-amino-acid chain: Large ribosomal subunit protein bL31 (73 aa).

The protein belongs to the bacterial ribosomal protein bL31 family. Type A subfamily. As to quaternary structure, part of the 50S ribosomal subunit.

Binds the 23S rRNA. This is Large ribosomal subunit protein bL31 (rpmE) from Jannaschia sp. (strain CCS1).